We begin with the raw amino-acid sequence, 687 residues long: Carboxysome assembly protein CcmM (687 aa).

The interval 242–327 (SINSDITNQI…RVVEVIIQRP (86 aa)) is rbcS-like repeat 1, SSUL1. Disordered regions lie at residues 328-355 (GDVP…SAVA) and 442-476 (VHRP…SSAG). Residues 335–346 (SRGTTTTKALSS) show a composition bias toward polar residues. The interval 366–445 (ANQLRALLHQ…RVAEIVVHRP (80 aa)) is rbcS-like repeat 2, SSUL2. Over residues 451–472 (GKPSSSSSSVGYKSAPVSSAGG) the composition is skewed to low complexity. The segment at 480–562 (PEVIATVRGL…RVLEQIIQRP (83 aa)) is rbcS-like repeat 3, SSUL3. Residues 565–590 (NVVAGRSPSSSSASTSSSASSNGFGS) form a disordered region. The span at 568 to 587 (AGRSPSSSSASTSSSASSNG) shows a compositional bias: low complexity. Residues 599–687 (SAVRLDNSVV…RVLETIIQRP (89 aa)) are rbcS-like repeat 4, SSUL4.

Belongs to the gamma-class carbonic anhydrase family. As to quaternary structure, probably forms homotrimers. Full length CcmM interacts with CcaA, CcmK1, CcmK2, CcmK4, CcmL, CcmN and itself, while the N-terminus of CcmM (first 249 residues) only interacts with CcaA, CcmM and CcmN. A probable CcmM-CcaA-CcmN complex as well as a CcaA-RuBisCO-CcmM complex can also be isolated. Interacts with full-length CcaA and the first 220 residues of CcaA; surface residues Gln-177 to Gln-188 are responsible in part for binding. In terms of processing, multiple forms of the protein of 73 (full length), 62, 52 (the most predominant form) and 36 kDa are seen even in the presence of protease inhibitors. CcmM52 interacts with CcaA.

It localises to the carboxysome. Functions as a scaffold protein for the assembly of beta-carboxysomes, initiates carboxysome assembly via its N-terminal domain binding to CcaA, CcmK and CcmL. Binds HCO(3)-, suggesting it may play a role in the activity or regulation of bicarbonate dehydration. Also initiates carboxysome assembly by coalescing RuBisCO (ribulose bisphosphate carboxylase, rbcL-rbcS) via its SSU-like domains. Produced as a full-length and a shorter form; both forms are required for correct carboxysome assembly and growth. Despite its strong similarity to gamma-class carbonic anhydrase (CA) it does not have detectable CA activity. Functionally, beta-carboxysome assembly initiates when soluble RuBisCO is condensed into a liquid matrix in a pre-carboxysome by the RbcS-like domains of probably both forms of CcmM. CcmN interacts with the N-terminus of full length CcmM, and then recruits the shell proteins (CcmK) via CcmN's encapsulation peptide. CcmM73 also interacts with CcmK proteins and CcmL directly. Shell formation requires CcmK proteins and CcmO. CcmL caps the otherwise elongated carboxysome. Once fully encapsulated carboxysomes are formed, they migrate within the cell probably via interactions with the cytoskeleton. This Synechocystis sp. (strain ATCC 27184 / PCC 6803 / Kazusa) protein is Carboxysome assembly protein CcmM.